The chain runs to 174 residues: Methionine-R-sulfoxide reductase B2, mitochondrial (174 aa).

The transit peptide at 1–61 (MARLLRALRG…PEQFYVTREK (61 aa)) directs the protein to the mitochondrion. Residues 62-172 (GTEAPFSGMY…NSVALKFKPS (111 aa)) enclose the MsrB domain. Zn(2+) is bound by residues Cys-82, Cys-85, Cys-138, and Cys-141. Residue Cys-161 is the Nucleophile of the active site.

Belongs to the MsrB Met sulfoxide reductase family. Zn(2+) serves as cofactor.

The protein localises to the mitochondrion. The enzyme catalyses L-methionyl-[protein] + [thioredoxin]-disulfide + H2O = L-methionyl-(R)-S-oxide-[protein] + [thioredoxin]-dithiol. It catalyses the reaction [thioredoxin]-disulfide + L-methionine + H2O = L-methionine (R)-S-oxide + [thioredoxin]-dithiol. Its function is as follows. Methionine-sulfoxide reductase that specifically reduces methionine (R)-sulfoxide back to methionine. While in many cases, methionine oxidation is the result of random oxidation following oxidative stress, methionine oxidation is also a post-translational modification that takes place on specific residue. Upon oxidative stress, may play a role in the preservation of mitochondrial integrity by decreasing the intracellular reactive oxygen species build-up through its scavenging role, hence contributing to cell survival and protein maintenance. The protein is Methionine-R-sulfoxide reductase B2, mitochondrial (Msrb2) of Rattus norvegicus (Rat).